The sequence spans 1132 residues: Major DNA-binding protein (1132 aa).

The required for nuclear localization stretch occupies residues 1103–1132 (VEELFPSPGVPSLTVGKKRKIASLLSDLDL).

The protein belongs to the herpesviridae major DNA-binding protein family. In terms of assembly, homooligomers. Forms double-helical filaments necessary for the formation of replication compartments within the host nucleus. Interacts with the origin-binding protein. Interacts with the helicase primase complex; this interaction stimulates primer synthesis activity of the helicase-primase complex. Interacts with the DNA polymerase. Interacts with the alkaline exonuclease; this interaction increases its nuclease processivity.

It is found in the host nucleus. Plays several crucial roles in viral infection. Participates in the opening of the viral DNA origin to initiate replication by interacting with the origin-binding protein. May disrupt loops, hairpins and other secondary structures present on ssDNA to reduce and eliminate pausing of viral DNA polymerase at specific sites during elongation. Promotes viral DNA recombination by performing strand-transfer, characterized by the ability to transfer a DNA strand from a linear duplex to a complementary single-stranded DNA circle. Can also catalyze the renaturation of complementary single strands. Additionally, reorganizes the host cell nucleus, leading to the formation of prereplicative sites and replication compartments. This process is driven by the protein which can form double-helical filaments in the absence of DNA. The polypeptide is Major DNA-binding protein (Human herpesvirus 8 type P (isolate GK18) (HHV-8)).